Consider the following 609-residue polypeptide: MPDYRSKTSTHGRNMAGARGLWRATGMKDEDFGKPIIAVVNSFTQFVPGHVHLKDLGQLVAAEIQAAGGVAKEFNTIAVDDGIAMGHDGMLYSLPSRDLIADSVEYMVNAHCADAMVCISNCDKITPGMLMAAMRLNIPVVFVSGGPMEAGKVKFRGDEKAIDLVDAMVVAADDSYTDEEVAEFERSACPTCGSCSGMFTANSMNCLTEALGLSLPGNGSIVATHANRKKLFLKAGQLIVELAKRYYEQNDASILPRSIATKAAFKNAMTLDIAMGGSTNTVLHLLAAANEAEVDFTMDDIDELSRRVPVLSKVAPAKQDVHMEDVHRAGGIMAILGELDRANLLDVSVPTVHEKTLKDALDKWDIIRTEDPDVYEFYRSSPGGVPTQVAFSQNRYYSTLDGDREKGVIRNAEHAFSKDGGLAVLYGNIALDGCIVKTAGVDESILKFTGSARVFESQDAAVEAILGNEIKAGDVVVIRYEGPRGGPGMQEMLYPTSYLKSKGLGKDCALVTDGRFSGGSSGLSIGHVSPEAAEGGAIGLVEDGDTIEIDIPNRTIHLNIDDATLAHRRTVQEAKGWHPKEERKRKVSKALKVYAMHTTSAAKGAVRVL.

Residue Asp81 coordinates Mg(2+). Position 122 (Cys122) interacts with [2Fe-2S] cluster. 2 residues coordinate Mg(2+): Asp123 and Lys124. Position 124 is an N6-carboxylysine (Lys124). Cys195 lines the [2Fe-2S] cluster pocket. Residue Glu491 participates in Mg(2+) binding. Ser517 serves as the catalytic Proton acceptor.

This sequence belongs to the IlvD/Edd family. In terms of assembly, homodimer. The cofactor is [2Fe-2S] cluster. Mg(2+) serves as cofactor.

It carries out the reaction (2R)-2,3-dihydroxy-3-methylbutanoate = 3-methyl-2-oxobutanoate + H2O. The enzyme catalyses (2R,3R)-2,3-dihydroxy-3-methylpentanoate = (S)-3-methyl-2-oxopentanoate + H2O. The protein operates within amino-acid biosynthesis; L-isoleucine biosynthesis; L-isoleucine from 2-oxobutanoate: step 3/4. It functions in the pathway amino-acid biosynthesis; L-valine biosynthesis; L-valine from pyruvate: step 3/4. Its function is as follows. Functions in the biosynthesis of branched-chain amino acids. Catalyzes the dehydration of (2R,3R)-2,3-dihydroxy-3-methylpentanoate (2,3-dihydroxy-3-methylvalerate) into 2-oxo-3-methylpentanoate (2-oxo-3-methylvalerate) and of (2R)-2,3-dihydroxy-3-methylbutanoate (2,3-dihydroxyisovalerate) into 2-oxo-3-methylbutanoate (2-oxoisovalerate), the penultimate precursor to L-isoleucine and L-valine, respectively. This chain is Dihydroxy-acid dehydratase, found in Acinetobacter baumannii (strain AB0057).